A 369-amino-acid chain; its full sequence is Phenylalanine--tRNA ligase alpha subunit (369 aa).

Position 269 (E269) interacts with Mg(2+).

The protein belongs to the class-II aminoacyl-tRNA synthetase family. Phe-tRNA synthetase alpha subunit type 1 subfamily. Tetramer of two alpha and two beta subunits. The cofactor is Mg(2+).

It is found in the cytoplasm. It carries out the reaction tRNA(Phe) + L-phenylalanine + ATP = L-phenylalanyl-tRNA(Phe) + AMP + diphosphate + H(+). The chain is Phenylalanine--tRNA ligase alpha subunit from Brucella ovis (strain ATCC 25840 / 63/290 / NCTC 10512).